A 467-amino-acid polypeptide reads, in one-letter code: 3-isopropylmalate dehydratase large subunit (467 aa).

Residues Cys347, Cys407, and Cys410 each coordinate [4Fe-4S] cluster.

It belongs to the aconitase/IPM isomerase family. LeuC type 1 subfamily. Heterodimer of LeuC and LeuD. It depends on [4Fe-4S] cluster as a cofactor.

It catalyses the reaction (2R,3S)-3-isopropylmalate = (2S)-2-isopropylmalate. It participates in amino-acid biosynthesis; L-leucine biosynthesis; L-leucine from 3-methyl-2-oxobutanoate: step 2/4. Its function is as follows. Catalyzes the isomerization between 2-isopropylmalate and 3-isopropylmalate, via the formation of 2-isopropylmaleate. This Trichormus variabilis (strain ATCC 29413 / PCC 7937) (Anabaena variabilis) protein is 3-isopropylmalate dehydratase large subunit.